The primary structure comprises 119 residues: Protein TusC (119 aa).

This sequence belongs to the DsrF/TusC family. As to quaternary structure, heterohexamer, formed by a dimer of trimers. The hexameric TusBCD complex contains 2 copies each of TusB, TusC and TusD. The TusBCD complex interacts with TusE.

It localises to the cytoplasm. Functionally, part of a sulfur-relay system required for 2-thiolation of 5-methylaminomethyl-2-thiouridine (mnm(5)s(2)U) at tRNA wobble positions. The polypeptide is Protein TusC (Escherichia fergusonii (strain ATCC 35469 / DSM 13698 / CCUG 18766 / IAM 14443 / JCM 21226 / LMG 7866 / NBRC 102419 / NCTC 12128 / CDC 0568-73)).